A 174-amino-acid chain; its full sequence is Probasin (174 aa).

The first 18 residues, 1–18, serve as a signal peptide directing secretion; it reads MMRVIILLLTLHVLGVSS. Cys-77 and Cys-168 are joined by a disulfide.

The protein belongs to the calycin superfamily. Lipocalin family.

The protein resides in the secreted. This chain is Probasin (Pbsn), found in Mus musculus (Mouse).